A 458-amino-acid polypeptide reads, in one-letter code: NADH-quinone oxidoreductase subunit N (458 aa).

13 helical membrane passes run 3–23, 29–49, 64–84, 92–112, 147–167, 188–208, 222–242, 265–285, 291–311, 320–340, 358–378, 394–414, and 437–457; these read QYLF…LLFL, FGLI…TCTS, QNVK…AIAV, FSVL…SSTL, TLLG…IFVV, ILLF…HAWI, FFAV…ISNL, NILF…AFGQ, FIGF…SNSA, IAYA…VLML, VALA…FIGF, IPTA…YARI, and LLTS…VLLI.

Belongs to the complex I subunit 2 family. In terms of assembly, NDH-1 is composed of 14 different subunits. Subunits NuoA, H, J, K, L, M, N constitute the membrane sector of the complex.

The protein resides in the cell inner membrane. It carries out the reaction a quinone + NADH + 5 H(+)(in) = a quinol + NAD(+) + 4 H(+)(out). In terms of biological role, NDH-1 shuttles electrons from NADH, via FMN and iron-sulfur (Fe-S) centers, to quinones in the respiratory chain. The immediate electron acceptor for the enzyme in this species is believed to be ubiquinone. Couples the redox reaction to proton translocation (for every two electrons transferred, four hydrogen ions are translocated across the cytoplasmic membrane), and thus conserves the redox energy in a proton gradient. The protein is NADH-quinone oxidoreductase subunit N of Neorickettsia risticii (strain Illinois).